We begin with the raw amino-acid sequence, 131 residues long: Small ribosomal subunit protein uS8 (131 aa).

It belongs to the universal ribosomal protein uS8 family. Part of the 30S ribosomal subunit. Contacts proteins S5 and S12.

Functionally, one of the primary rRNA binding proteins, it binds directly to 16S rRNA central domain where it helps coordinate assembly of the platform of the 30S subunit. The sequence is that of Small ribosomal subunit protein uS8 from Polaromonas naphthalenivorans (strain CJ2).